The sequence spans 285 residues: NADH-cytochrome b5 reductase 1 (285 aa).

Residues 7 to 23 form a helical membrane-spanning segment; sequence LATFSVLVLFYKLFTYS. The region spanning 40 to 144 is the FAD-binding FR-type domain; the sequence is TEFREFELVE…SGPRGFYEYV (105 aa). FAD contacts are provided by residues 124–139 and 150–182; these read GDMK…GPRG and HLAM…RVTL.

It belongs to the flavoprotein pyridine nucleotide cytochrome reductase family. Monomer. Component of the 2-(3-amino-3-carboxypropyl)histidine synthase complex composed of DPH1, DPH2, DPH3 and a NADH-dependent reductase, predominantly CBR1. Requires FAD as cofactor.

The protein localises to the mitochondrion outer membrane. It catalyses the reaction 2 Fe(III)-[cytochrome b5] + NADH = 2 Fe(II)-[cytochrome b5] + NAD(+) + H(+). The enzyme catalyses 2 Fe(3+)-[Dph3] + NADH = 2 Fe(2+)-[Dph3] + NAD(+) + H(+). Its pathway is protein modification; peptidyl-diphthamide biosynthesis. In terms of biological role, NADH-dependent reductase for DPH3 and cytochrome b5. Required for the first step of diphthamide biosynthesis, a post-translational modification of histidine which occurs in elongation factor 2. DPH1 and DPH2 transfer a 3-amino-3-carboxypropyl (ACP) group from S-adenosyl-L-methionine (SAM) to a histidine residue, the reaction is assisted by a reduction system comprising DPH3 and a NADH-dependent reductase, predominantly CBR1. By reducing DPH3, also involved in the formation of the tRNA wobble base modification mcm5s 2U (5-methoxycarbonylmethyl-2-thiouridine), mediated by the elongator complex. The cytochrome b5/NADH cytochrome b5 reductase electron transfer system supports the catalytic activity of several sterol biosynthetic enzymes. This is NADH-cytochrome b5 reductase 1 (CBR1) from Candida glabrata (strain ATCC 2001 / BCRC 20586 / JCM 3761 / NBRC 0622 / NRRL Y-65 / CBS 138) (Yeast).